The chain runs to 583 residues: Phosphoglucomutase, cytoplasmic 1 (583 aa).

Positions 25 and 124 each coordinate alpha-D-glucose 1,6-bisphosphate. Serine 124 (phosphoserine intermediate) is an active-site residue. 4 residues coordinate Mg(2+): serine 124, aspartate 300, aspartate 302, and aspartate 304. Serine 124 bears the Phosphoserine mark. Aspartate 304, arginine 305, threonine 368, glutamate 387, serine 389, and lysine 400 together coordinate alpha-D-glucose 1,6-bisphosphate.

The protein belongs to the phosphohexose mutase family. As to quaternary structure, monomer. Requires Mg(2+) as cofactor. Autophosphorylated. Mostly expressed in roots and coleoptiles, and, to a lower extent, in leaves, pollen and developing seeds.

The protein localises to the cytoplasm. The catalysed reaction is alpha-D-glucose 1-phosphate = alpha-D-glucose 6-phosphate. It carries out the reaction O-phospho-L-seryl-[protein] + alpha-D-glucose 1-phosphate = alpha-D-glucose 1,6-bisphosphate + L-seryl-[protein]. It catalyses the reaction alpha-D-glucose 1,6-bisphosphate + L-seryl-[protein] = O-phospho-L-seryl-[protein] + alpha-D-glucose 6-phosphate. In terms of biological role, catalyzes the reversible isomerization of alpha-D-glucose 1-phosphate to alpha-D-glucose 6-phosphate. The mechanism proceeds via the intermediate compound alpha-D-glucose 1,6-bisphosphate. This enzyme participates in both the breakdown and synthesis of glucose. This chain is Phosphoglucomutase, cytoplasmic 1, found in Zea mays (Maize).